A 76-amino-acid chain; its full sequence is Cytochrome c oxidase subunit 6C-1 (76 aa).

Topologically, residues 4 to 14 (GALLPKPQMHD) are mitochondrial matrix. Residues 15 to 55 (PLSKRLWVHIVGAFIVDLGVAAAHKFGAAKPRKKAYADFYR) traverse the membrane as a helical segment. The Mitochondrial intermembrane portion of the chain corresponds to 56-76 (NHDPMKDFDEMRKAGVFRSVK).

It belongs to the cytochrome c oxidase subunit 6c family. Component of the cytochrome c oxidase (complex IV, CIV), a multisubunit enzyme composed of 14 subunits. The complex is composed of a catalytic core of 3 subunits MT-CO1, MT-CO2 and MT-CO3, encoded in the mitochondrial DNA, and 11 supernumerary subunits COX4I, COX5A, COX5B, COX6A, COX6B, COX6C, COX7A, COX7B, COX7C, COX8 and NDUFA4, which are encoded in the nuclear genome. The complex exists as a monomer or a dimer and forms supercomplexes (SCs) in the inner mitochondrial membrane with NADH-ubiquinone oxidoreductase (complex I, CI) and ubiquinol-cytochrome c oxidoreductase (cytochrome b-c1 complex, complex III, CIII), resulting in different assemblies (supercomplex SCI(1)III(2)IV(1) and megacomplex MCI(2)III(2)IV(2)).

It localises to the mitochondrion inner membrane. It participates in energy metabolism; oxidative phosphorylation. In terms of biological role, component of the cytochrome c oxidase, the last enzyme in the mitochondrial electron transport chain which drives oxidative phosphorylation. The respiratory chain contains 3 multisubunit complexes succinate dehydrogenase (complex II, CII), ubiquinol-cytochrome c oxidoreductase (cytochrome b-c1 complex, complex III, CIII) and cytochrome c oxidase (complex IV, CIV), that cooperate to transfer electrons derived from NADH and succinate to molecular oxygen, creating an electrochemical gradient over the inner membrane that drives transmembrane transport and the ATP synthase. Cytochrome c oxidase is the component of the respiratory chain that catalyzes the reduction of oxygen to water. Electrons originating from reduced cytochrome c in the intermembrane space (IMS) are transferred via the dinuclear copper A center (CU(A)) of subunit 2 and heme A of subunit 1 to the active site in subunit 1, a binuclear center (BNC) formed by heme A3 and copper B (CU(B)). The BNC reduces molecular oxygen to 2 water molecules using 4 electrons from cytochrome c in the IMS and 4 protons from the mitochondrial matrix. The polypeptide is Cytochrome c oxidase subunit 6C-1 (Cox6c1) (Rattus norvegicus (Rat)).